We begin with the raw amino-acid sequence, 223 residues long: Cytidylate kinase (223 aa).

Residue 10–18 (GPASSGKST) coordinates ATP.

It belongs to the cytidylate kinase family. Type 1 subfamily.

It is found in the cytoplasm. It carries out the reaction CMP + ATP = CDP + ADP. The catalysed reaction is dCMP + ATP = dCDP + ADP. In Streptococcus pneumoniae (strain Hungary19A-6), this protein is Cytidylate kinase.